The sequence spans 749 residues: Catalase-peroxidase (749 aa).

A compositionally biased stretch (basic and acidic residues) spans 1–12; sequence MSSDTSDTRPPH. The tract at residues 1–40 is disordered; sequence MSSDTSDTRPPHSDSGTQSNSESENPIIDSPEPKAHAPLT. The span at 14–24 shows a compositional bias: polar residues; sequence DSGTQSNSESE. The segment at residues 113–240 is a cross-link (tryptophyl-tyrosyl-methioninium (Trp-Tyr) (with M-266)); it reads WHAAGTYRIF…FGATTMGLIY (128 aa). The active-site Proton acceptor is the His-114. The tryptophyl-tyrosyl-methioninium (Tyr-Met) (with W-113) cross-link spans 240 to 266; sequence YVNPEGPEGKPDPLAAAHDIRETFGRM. His-281 is a binding site for heme b.

This sequence belongs to the peroxidase family. Peroxidase/catalase subfamily. In terms of assembly, homodimer or homotetramer. It depends on heme b as a cofactor. Formation of the three residue Trp-Tyr-Met cross-link is important for the catalase, but not the peroxidase activity of the enzyme.

The enzyme catalyses H2O2 + AH2 = A + 2 H2O. It catalyses the reaction 2 H2O2 = O2 + 2 H2O. Bifunctional enzyme with both catalase and broad-spectrum peroxidase activity. In Mycobacterium sp. (strain JLS), this protein is Catalase-peroxidase.